A 308-amino-acid polypeptide reads, in one-letter code: Probable very-long-chain enoyl-CoA reductase art-1 (308 aa).

In terms of domain architecture, Ubiquitin-like spans 7 to 85; the sequence is VYDAKRTDNL…VLYVRDLGPQ (79 aa). The next 4 membrane-spanning stretches (helical) occupy residues 112–132, 169–189, 194–214, and 255–275; these read FIYGQAAVNATMHPAVQIAFF, WGFAAFVAYFVNHPLFTPPAF, VYFGLAGFVISEFGNLSIHIL, and WIFFSIMVQSLPAIIFTTAGF.

It belongs to the steroid 5-alpha reductase family.

The protein resides in the endoplasmic reticulum membrane. The catalysed reaction is a very-long-chain 2,3-saturated fatty acyl-CoA + NADP(+) = a very-long-chain (2E)-enoyl-CoA + NADPH + H(+). Its pathway is lipid metabolism; fatty acid biosynthesis. In terms of biological role, catalyzes the last of the four reactions of the long-chain fatty acids elongation cycle. This endoplasmic reticulum-bound enzymatic process, allows the addition of 2 carbons to the chain of long- and very long-chain fatty acids/VLCFAs per cycle. This enzyme reduces the trans-2,3-enoyl-CoA fatty acid intermediate to an acyl-CoA that can be further elongated by entering a new cycle of elongation. Thereby, it participates in the production of VLCFAs of different chain lengths that are involved in multiple biological processes as precursors of membrane lipids and lipid mediators. In Caenorhabditis elegans, this protein is Probable very-long-chain enoyl-CoA reductase art-1 (art-1).